The chain runs to 102 residues: Aspartyl/glutamyl-tRNA(Asn/Gln) amidotransferase subunit C (102 aa).

The protein belongs to the GatC family. In terms of assembly, heterotrimer of A, B and C subunits.

It catalyses the reaction L-glutamyl-tRNA(Gln) + L-glutamine + ATP + H2O = L-glutaminyl-tRNA(Gln) + L-glutamate + ADP + phosphate + H(+). It carries out the reaction L-aspartyl-tRNA(Asn) + L-glutamine + ATP + H2O = L-asparaginyl-tRNA(Asn) + L-glutamate + ADP + phosphate + 2 H(+). Its function is as follows. Allows the formation of correctly charged Asn-tRNA(Asn) or Gln-tRNA(Gln) through the transamidation of misacylated Asp-tRNA(Asn) or Glu-tRNA(Gln) in organisms which lack either or both of asparaginyl-tRNA or glutaminyl-tRNA synthetases. The reaction takes place in the presence of glutamine and ATP through an activated phospho-Asp-tRNA(Asn) or phospho-Glu-tRNA(Gln). The sequence is that of Aspartyl/glutamyl-tRNA(Asn/Gln) amidotransferase subunit C from Bordetella petrii (strain ATCC BAA-461 / DSM 12804 / CCUG 43448).